A 911-amino-acid chain; its full sequence is Eukaryotic translation initiation factor 3 subunit C (911 aa).

Disordered regions lie at residues 1-38 (MSRF…DDEE) and 155-181 (SRFR…GEAA). Positions 11-20 (SESESSEEEV) are enriched in acidic residues. Over residues 23–32 (PNFNKASAFQ) the composition is skewed to polar residues. Phosphoserine is present on residues Ser-34, Ser-165, Ser-175, and Ser-184. Residues 162 to 171 (DQESEAEDEE) show a composition bias toward acidic residues. Residues 196 to 208 (APKIAKSAPAKSV) are compositionally biased toward low complexity. The interval 196 to 284 (APKIAKSAPA…KRAEDDEDGE (89 aa)) is disordered. Residues 210-236 (ADDEDSDDSIDWDSDSESETESSEDEN) show a composition bias toward acidic residues. The segment covering 241-271 (MRERFLKRSTEKGEDKGDDDKRKDKRKEQKL) has biased composition (basic and acidic residues). Positions 642-818 (FHMHINLELL…ETVVMHRSEP (177 aa)) constitute a PCI domain. The tract at residues 851 to 911 (FQRGNMGNRG…QQQVQTIDEE (61 aa)) is disordered. Residues 885 to 896 (QRNRNQRGHHKN) show a composition bias toward basic residues. Residues 897-911 (QQQQQQQQVQTIDEE) show a composition bias toward low complexity.

This sequence belongs to the eIF-3 subunit C family. In terms of assembly, component of the eukaryotic translation initiation factor 3 (eIF-3) complex. The eIF-3 complex interacts with pix.

It is found in the cytoplasm. Component of the eukaryotic translation initiation factor 3 (eIF-3) complex, which is involved in protein synthesis of a specialized repertoire of mRNAs and, together with other initiation factors, stimulates binding of mRNA and methionyl-tRNAi to the 40S ribosome. The eIF-3 complex specifically targets and initiates translation of a subset of mRNAs involved in cell proliferation. This Drosophila pseudoobscura pseudoobscura (Fruit fly) protein is Eukaryotic translation initiation factor 3 subunit C.